A 350-amino-acid polypeptide reads, in one-letter code: 5'-tyrosyl-DNA phosphodiesterase (350 aa).

Residues 113-117 form an interaction with 5' end of substrate DNA region; sequence NIDGL. The Mg(2+) site is built by D115 and E145. The segment at 219–224 is interaction with 5' end of substrate DNA; sequence HLESMR. The active-site Proton donor/acceptor is D258. The segment at 260–262 is interaction with 5' end of substrate DNA; the sequence is NLR.

This sequence belongs to the CCR4/nocturin family. TTRAP/TDP2 subfamily. Mg(2+) serves as cofactor. Mn(2+) is required as a cofactor.

The protein localises to the nucleus. It is found in the PML body. DNA repair enzyme that can remove a variety of covalent adducts from DNA through hydrolysis of a 5'-phosphodiester bond, giving rise to DNA with a free 5' phosphate. Catalyzes the hydrolysis of dead-end complexes between DNA and the topoisomerase 2 (top2) active site tyrosine residue. Hydrolyzes 5'-phosphoglycolates on protruding 5' ends on DNA double-strand breaks (DSBs) due to DNA damage by radiation and free radicals. The polypeptide is 5'-tyrosyl-DNA phosphodiesterase (Caenorhabditis briggsae).